The primary structure comprises 150 residues: Small ribosomal subunit protein eS19 (150 aa).

It belongs to the eukaryotic ribosomal protein eS19 family. Part of the 30S ribosomal subunit.

Functionally, may be involved in maturation of the 30S ribosomal subunit. The protein is Small ribosomal subunit protein eS19 of Thermoplasma volcanium (strain ATCC 51530 / DSM 4299 / JCM 9571 / NBRC 15438 / GSS1).